Consider the following 497-residue polypeptide: Zinc finger protein 3 (497 aa).

Over residues 1 to 20 the composition is skewed to basic and acidic residues; the sequence is MGTEKKEGLPKEETSEDSKP. The tract at residues 1–53 is disordered; that stretch reads MGTEKKEGLPKEETSEDSKPHGQTVEKLAQEVCHGHEFGEASEEDMSEGHLRE. Residues K6 and K11 each participate in a glycyl lysine isopeptide (Lys-Gly) (interchain with G-Cter in SUMO2) cross-link. 13 C2H2-type zinc fingers span residues 136-158, 164-186, 192-214, 220-242, 248-270, 276-298, 304-326, 332-354, 360-382, 388-410, 416-438, 444-466, and 472-494; these read HTCK…MRVH, FECK…QRIH, FACT…HRIH, YKCE…QRIH, YECN…QRIH, HECS…QKIH, YLCN…QRIH, YECS…IRIH, YVCK…ERIH, YECF…QRIH, HQCN…QKIH, YECS…QRIH, and YECQ…QSVH.

This sequence belongs to the krueppel C2H2-type zinc-finger protein family.

It is found in the nucleus. In terms of biological role, may be involved in transcriptional regulation. The protein is Zinc finger protein 3 (Zfp3) of Mus musculus (Mouse).